Here is a 1310-residue protein sequence, read N- to C-terminus: Major viral transcription factor ICP4 homolog (1310 aa).

Disordered stretches follow at residues 117–271 (AGAR…GPVE), 285–454 (GAKA…TPII), and 636–696 (GSSP…SLLD). Residues 341-350 (PVEKKPKSRE) show a composition bias toward basic and acidic residues. Composition is skewed to low complexity over residues 351 to 364 (FVSS…WGSS), 392 to 407 (PSPS…DGGS), and 648 to 666 (PSPT…SAAA). Residues 677–685 (RLRTPRKRK) carry the Nuclear localization signal motif. Phosphoserine; by VZV ORF66 occurs at positions 686 and 722. 2 disordered regions span residues 1195 to 1258 (RFVF…SFGV) and 1282 to 1310 (ELLS…QSRG). The segment covering 1217–1227 (RTADDREHALE) has biased composition (basic and acidic residues). Residues 1228 to 1250 (PDDWEVGCEDAWDSEEGGGDDGD) are compositionally biased toward acidic residues.

Belongs to the herpesviridae ICP4 family. In terms of assembly, interacts with IE4 and IE63. Interacts with human USF1 and SP1. In terms of processing, phosphorylated by ORF66 protein kinase on Ser-686 and Ser-722. Also phosphorylated by ORF47 protein kinase and by human CSNK2A1/CKII.

Its subcellular location is the host nucleus. It localises to the host cytoplasm. It is found in the virion tegument. In terms of biological role, transcriptional transactivator. May interact with and recruit specific components of the general transcription machinery to viral promoters and stabilize their formation for transcription initiation. Negatively regulates its own transcription. This immediate early (EI) protein may be necessary in virion for viral pathogenesis. In Homo sapiens (Human), this protein is Major viral transcription factor ICP4 homolog.